Reading from the N-terminus, the 296-residue chain is Protoheme IX farnesyltransferase (296 aa).

9 helical membrane-spanning segments follow: residues 11 to 31, 35 to 55, 84 to 104, 107 to 127, 132 to 152, 162 to 182, 208 to 228, 229 to 249, and 264 to 284; these read PGII…AAQG, YPLF…GCVF, VTLV…YIAA, LAMW…SLYM, VYGT…GYCA, LILL…IAIF, ITLY…GGYA, GYKY…MALS, and LFVF…VDSM.

This sequence belongs to the UbiA prenyltransferase family. Protoheme IX farnesyltransferase subfamily.

It localises to the cell inner membrane. It carries out the reaction heme b + (2E,6E)-farnesyl diphosphate + H2O = Fe(II)-heme o + diphosphate. It functions in the pathway porphyrin-containing compound metabolism; heme O biosynthesis; heme O from protoheme: step 1/1. Its function is as follows. Converts heme B (protoheme IX) to heme O by substitution of the vinyl group on carbon 2 of heme B porphyrin ring with a hydroxyethyl farnesyl side group. The protein is Protoheme IX farnesyltransferase of Pectobacterium carotovorum subsp. carotovorum (strain PC1).